The primary structure comprises 732 residues: Catalase-peroxidase (732 aa).

Over residues 1 to 11 (MDAKTDDKDGG) the composition is skewed to basic and acidic residues. The interval 1-24 (MDAKTDDKDGGKCPFPHGGGRGRR) is disordered. The tryptophyl-tyrosyl-methioninium (Trp-Tyr) (with M-245) cross-link spans 97-219 (WHSAGTYRTT…LGAVQMGLIY (123 aa)). Catalysis depends on histidine 98, which acts as the Proton acceptor. Positions 219 to 245 (YVNPEGPNGNPDPVAAAKDIRETFARM) form a cross-link, tryptophyl-tyrosyl-methioninium (Tyr-Met) (with W-97). Heme b is bound at residue histidine 260.

Belongs to the peroxidase family. Peroxidase/catalase subfamily. Homodimer or homotetramer. Requires heme b as cofactor. Post-translationally, formation of the three residue Trp-Tyr-Met cross-link is important for the catalase, but not the peroxidase activity of the enzyme.

The catalysed reaction is H2O2 + AH2 = A + 2 H2O. It catalyses the reaction 2 H2O2 = O2 + 2 H2O. Bifunctional enzyme with both catalase and broad-spectrum peroxidase activity. The protein is Catalase-peroxidase of Rhodopseudomonas palustris (strain HaA2).